Reading from the N-terminus, the 292-residue chain is 2-(5''-triphosphoribosyl)-3'-dephosphocoenzyme-A synthase (292 aa).

The protein belongs to the CitG/MdcB family.

The catalysed reaction is 3'-dephospho-CoA + ATP = 2'-(5''-triphospho-alpha-D-ribosyl)-3'-dephospho-CoA + adenine. Its function is as follows. Catalyzes the formation of 2-(5''-triphosphoribosyl)-3'-dephosphocoenzyme-A, the precursor of the prosthetic group of the holo-acyl carrier protein (gamma chain) of citrate lyase, from ATP and dephospho-CoA. The chain is 2-(5''-triphosphoribosyl)-3'-dephosphocoenzyme-A synthase from Escherichia coli O6:K15:H31 (strain 536 / UPEC).